The sequence spans 470 residues: Poly(A) polymerase catalytic subunit (470 aa).

Active-site residues include aspartate 192 and aspartate 194.

This sequence belongs to the poxviridae poly(A) polymerase catalytic subunit family. Heterodimer of a large (catalytic) subunit and a small (regulatory) subunit.

It carries out the reaction RNA(n) + ATP = RNA(n)-3'-adenine ribonucleotide + diphosphate. Polymerase that creates the 3'-poly(A) tail of mRNA's. This Homo sapiens (Human) protein is Poly(A) polymerase catalytic subunit (PAPL).